A 393-amino-acid polypeptide reads, in one-letter code: Glycerol-3-phosphate dehydrogenase [NAD(+)] 1 (393 aa).

NAD(+) is bound by residues G45 to G50, F133, K157, and A190. Position 157 (K157) interacts with substrate. Residue K250 is the Proton acceptor of the active site. NAD(+)-binding residues include R316 and Q345. Substrate is bound at residue R316 to N317.

This sequence belongs to the NAD-dependent glycerol-3-phosphate dehydrogenase family.

It catalyses the reaction sn-glycerol 3-phosphate + NAD(+) = dihydroxyacetone phosphate + NADH + H(+). This chain is Glycerol-3-phosphate dehydrogenase [NAD(+)] 1 (gpd1), found in Cyberlindnera jadinii (Torula yeast).